Here is a 341-residue protein sequence, read N- to C-terminus: MKALLRQVAEGKDLTEAQAEAAMTLMMTGEATPAQVAAFLMALRIKGETVAEITGAARVMRERAIRIHHSRPLVVDTCGTGGDGSHTFNISTTAAFVVAGAGVAVAKHGNRAATSLTGSADVLEALGIHLDLTPEEVGRCIDEVGIGFLYAPALHTSMKHVAPVRREIGLRNIFNLLGPLTNPAMAQAQLMGVYDPNLTEPLARVLGNLGVKHALVVHGTDGVDEISISAPTVVSEMRDGFVHTYRVVPEDVGLSRAPREYIRGGTKEENARITESVLSGEPGPRRDVVLLNAAAALLAADRVRTLREGVELAAQSIDSGEARRVLERMREFTHRLRAESA.

Residues glycine 79, glycine 82 to aspartate 83, threonine 87, asparagine 89 to threonine 92, lysine 107 to serine 115, and serine 119 each bind 5-phospho-alpha-D-ribose 1-diphosphate. Glycine 79 is a binding site for anthranilate. Serine 91 serves as a coordination point for Mg(2+). An anthranilate-binding site is contributed by asparagine 110. Arginine 165 lines the anthranilate pocket. Positions 224 and 225 each coordinate Mg(2+).

This sequence belongs to the anthranilate phosphoribosyltransferase family. As to quaternary structure, homodimer. Requires Mg(2+) as cofactor.

The enzyme catalyses N-(5-phospho-beta-D-ribosyl)anthranilate + diphosphate = 5-phospho-alpha-D-ribose 1-diphosphate + anthranilate. It participates in amino-acid biosynthesis; L-tryptophan biosynthesis; L-tryptophan from chorismate: step 2/5. In terms of biological role, catalyzes the transfer of the phosphoribosyl group of 5-phosphorylribose-1-pyrophosphate (PRPP) to anthranilate to yield N-(5'-phosphoribosyl)-anthranilate (PRA). The sequence is that of Anthranilate phosphoribosyltransferase from Symbiobacterium thermophilum (strain DSM 24528 / JCM 14929 / IAM 14863 / T).